The chain runs to 54 residues: Large ribosomal subunit protein bL33 (54 aa).

It belongs to the bacterial ribosomal protein bL33 family.

In Corynebacterium efficiens (strain DSM 44549 / YS-314 / AJ 12310 / JCM 11189 / NBRC 100395), this protein is Large ribosomal subunit protein bL33.